The following is a 244-amino-acid chain: Transcriptional activator protein anr (244 aa).

Ala21–Asp149 is a binding site for a nucleoside 3',5'-cyclic phosphate. The 74-residue stretch at Lys159–Ile232 folds into the HTH crp-type domain. Positions Arg192–Thr211 form a DNA-binding region, H-T-H motif.

Transcriptional activator of anaerobic gene expression. This Pseudomonas aeruginosa (strain ATCC 15692 / DSM 22644 / CIP 104116 / JCM 14847 / LMG 12228 / 1C / PRS 101 / PAO1) protein is Transcriptional activator protein anr (anr).